Reading from the N-terminus, the 321-residue chain is Probable arabinan endo-1,5-alpha-L-arabinosidase A (321 aa).

Residues 1 to 19 form the signal peptide; that stretch reads MYRLLSVASVPLLASLVHG. The active-site Proton acceptor is the aspartate 34. Glutamate 200 serves as the catalytic Proton donor. Asparagine 295 carries N-linked (GlcNAc...) asparagine glycosylation.

It belongs to the glycosyl hydrolase 43 family.

The protein localises to the secreted. It carries out the reaction Endohydrolysis of (1-&gt;5)-alpha-arabinofuranosidic linkages in (1-&gt;5)-arabinans.. The protein operates within glycan metabolism; L-arabinan degradation. Functionally, endo-1,5-alpha-L-arabinanase involved in degradation of pectin. Its preferred substrate is linear 1,5-alpha-L-arabinan. This is Probable arabinan endo-1,5-alpha-L-arabinosidase A (abnA) from Aspergillus niger (strain ATCC MYA-4892 / CBS 513.88 / FGSC A1513).